The sequence spans 305 residues: Coiled-coil domain-containing protein 69 (305 aa).

The N-myristoyl glycine moiety is linked to residue G2. The segment at 13-41 (LRKKKRQKAHQEGLTSKELNDLNAKSQEP) is disordered. Coiled-coil stretches lie at residues 42–167 (NELL…SVLS) and 216–278 (MERN…KEQN).

The protein belongs to the CCDC69 family.

It localises to the cytoplasm. It is found in the cytoskeleton. The protein localises to the spindle. The protein resides in the midbody. Functionally, may act as a scaffold to regulate the recruitment and assembly of spindle midzone components. The protein is Coiled-coil domain-containing protein 69 (ccdc69) of Xenopus tropicalis (Western clawed frog).